The chain runs to 487 residues: WRKY transcription factor 1 (487 aa).

A disordered region spans residues 69–104 (QSEVDVASPVSEKAPKVSESSGALSLQSGSEGNSPF). Ser76 bears the Phosphoserine mark. Polar residues predominate over residues 86–101 (SESSGALSLQSGSEGN). The segment at residues 105-169 (IREKVMEDGY…YFGEHDHPKP (65 aa)) is a DNA-binding region (WRKY 1). Zn(2+) contacts are provided by Cys136, Cys141, His164, and His166. The disordered stretch occupies residues 255–287 (SSRITGDNTHKDYNSPTAKRRKKGGNIELSPVE). The short motif at 273 to 277 (KRRKK) is the Nuclear localization signal element. Residues 301–366 (TLFDIVNDGY…YEGKHDHDMP (66 aa)) constitute a DNA-binding region (WRKY 2). The Zn(2+) site is built by Cys332, Cys337, His361, and His363. Residues 380 to 487 (EVDDKEGDAN…QKPKTEPAQS (108 aa)) form a disordered region. The segment covering 390-401 (KTPQSSTLQSIT) has biased composition (polar residues). Basic and acidic residues-rich tracts occupy residues 429 to 462 (LDEK…DDKT) and 476 to 487 (EEQKPKTEPAQS).

This sequence belongs to the WRKY group I family. As to expression, expressed to similar levels in root and flower, to a somewhat lower level in stem and to low levels in leaf and siliques.

The protein resides in the nucleus. Transcription factor. Binds to a 5'-CGTTGACCGAG-3' consensus core sequence which contains a W box, a frequently occurring elicitor-responsive cis-acting element. The sequence is that of WRKY transcription factor 1 from Arabidopsis thaliana (Mouse-ear cress).